The primary structure comprises 67 residues: Phycobilisome 7.8 kDa linker polypeptide, allophycocyanin-associated, core (67 aa).

Residues 1–56 form the CpcD-like domain; the sequence is MRMFKITACVPSQTRIRTQRELQNTYFTKLVPYENWFREQQRIQKMGGKIVKVELF.

The protein belongs to the phycobilisome linker protein family.

The protein localises to the cellular thylakoid membrane. In terms of biological role, rod linker protein, associated with allophycocyanin. Linker polypeptides determine the state of aggregation and the location of the disk-shaped phycobiliprotein units within the phycobilisome and modulate their spectroscopic properties in order to mediate a directed and optimal energy transfer. In Thermosynechococcus vestitus (strain NIES-2133 / IAM M-273 / BP-1), this protein is Phycobilisome 7.8 kDa linker polypeptide, allophycocyanin-associated, core (apcC).